The chain runs to 333 residues: Tetraacyldisaccharide 4'-kinase (333 aa).

55-62 (TAGGNGKT) contributes to the ATP binding site.

The protein belongs to the LpxK family.

The catalysed reaction is a lipid A disaccharide + ATP = a lipid IVA + ADP + H(+). It participates in glycolipid biosynthesis; lipid IV(A) biosynthesis; lipid IV(A) from (3R)-3-hydroxytetradecanoyl-[acyl-carrier-protein] and UDP-N-acetyl-alpha-D-glucosamine: step 6/6. Its function is as follows. Transfers the gamma-phosphate of ATP to the 4'-position of a tetraacyldisaccharide 1-phosphate intermediate (termed DS-1-P) to form tetraacyldisaccharide 1,4'-bis-phosphate (lipid IVA). The polypeptide is Tetraacyldisaccharide 4'-kinase (Pectobacterium atrosepticum (strain SCRI 1043 / ATCC BAA-672) (Erwinia carotovora subsp. atroseptica)).